The chain runs to 442 residues: tRNA-2-methylthio-N(6)-dimethylallyladenosine synthase (442 aa).

In terms of domain architecture, MTTase N-terminal spans 6-122; that stretch reads RKFYIHTFGC…LPALIAEAGD (117 aa). Residues Cys15, Cys51, Cys85, Cys157, Cys161, and Cys164 each contribute to the [4Fe-4S] cluster site. In terms of domain architecture, Radical SAM core spans 143–373; sequence RTQSLNAFVP…IDLQNGISAE (231 aa). The TRAM domain maps to 376 to 439; sequence GLAPGSVVEV…SATLFGQSAE (64 aa).

This sequence belongs to the methylthiotransferase family. MiaB subfamily. In terms of assembly, monomer. [4Fe-4S] cluster is required as a cofactor.

Its subcellular location is the cytoplasm. It carries out the reaction N(6)-dimethylallyladenosine(37) in tRNA + (sulfur carrier)-SH + AH2 + 2 S-adenosyl-L-methionine = 2-methylsulfanyl-N(6)-dimethylallyladenosine(37) in tRNA + (sulfur carrier)-H + 5'-deoxyadenosine + L-methionine + A + S-adenosyl-L-homocysteine + 2 H(+). Functionally, catalyzes the methylthiolation of N6-(dimethylallyl)adenosine (i(6)A), leading to the formation of 2-methylthio-N6-(dimethylallyl)adenosine (ms(2)i(6)A) at position 37 in tRNAs that read codons beginning with uridine. In Chlorobium phaeobacteroides (strain DSM 266 / SMG 266 / 2430), this protein is tRNA-2-methylthio-N(6)-dimethylallyladenosine synthase.